A 79-amino-acid polypeptide reads, in one-letter code: Sulfur carrier protein TusA (79 aa).

Catalysis depends on Cys16, which acts as the Cysteine persulfide intermediate.

This sequence belongs to the sulfur carrier protein TusA family.

The protein localises to the cytoplasm. Sulfur carrier protein which probably makes part of a sulfur-relay system. The protein is Sulfur carrier protein TusA of Pseudomonas paraeruginosa (strain DSM 24068 / PA7) (Pseudomonas aeruginosa (strain PA7)).